Reading from the N-terminus, the 120-residue chain is Large ribosomal subunit protein bL12 (120 aa).

This sequence belongs to the bacterial ribosomal protein bL12 family. Homodimer. Part of the ribosomal stalk of the 50S ribosomal subunit. Forms a multimeric L10(L12)X complex, where L10 forms an elongated spine to which 2 to 4 L12 dimers bind in a sequential fashion. Binds GTP-bound translation factors.

Forms part of the ribosomal stalk which helps the ribosome interact with GTP-bound translation factors. Is thus essential for accurate translation. This Pseudoalteromonas translucida (strain TAC 125) protein is Large ribosomal subunit protein bL12.